Reading from the N-terminus, the 601-residue chain is Elongation factor 4 (601 aa).

The tr-type G domain maps to 6 to 188 (NYIRNFSIVA…AIVTQLPSPR (183 aa)). GTP-binding positions include 18–23 (DHGKST) and 135–138 (NKVD).

Belongs to the TRAFAC class translation factor GTPase superfamily. Classic translation factor GTPase family. LepA subfamily.

It is found in the cell inner membrane. It carries out the reaction GTP + H2O = GDP + phosphate + H(+). Required for accurate and efficient protein synthesis under certain stress conditions. May act as a fidelity factor of the translation reaction, by catalyzing a one-codon backward translocation of tRNAs on improperly translocated ribosomes. Back-translocation proceeds from a post-translocation (POST) complex to a pre-translocation (PRE) complex, thus giving elongation factor G a second chance to translocate the tRNAs correctly. Binds to ribosomes in a GTP-dependent manner. This Bartonella henselae (strain ATCC 49882 / DSM 28221 / CCUG 30454 / Houston 1) (Rochalimaea henselae) protein is Elongation factor 4.